Here is a 155-residue protein sequence, read N- to C-terminus: Small ribosomal subunit protein uS7 (155 aa).

It belongs to the universal ribosomal protein uS7 family. Part of the 30S ribosomal subunit. Contacts proteins S9 and S11.

Its function is as follows. One of the primary rRNA binding proteins, it binds directly to 16S rRNA where it nucleates assembly of the head domain of the 30S subunit. Is located at the subunit interface close to the decoding center, probably blocks exit of the E-site tRNA. This Xanthomonas campestris pv. campestris (strain 8004) protein is Small ribosomal subunit protein uS7.